A 379-amino-acid chain; its full sequence is Dual-specificity RNA methyltransferase RlmN (379 aa).

Residue E90 is the Proton acceptor of the active site. One can recognise a Radical SAM core domain in the interval E96–D348. Residues C103 and C353 are joined by a disulfide bond. [4Fe-4S] cluster is bound by residues C110, C114, and C117. S-adenosyl-L-methionine is bound by residues G179 to E180, S211, S233 to H235, and N310. The active-site S-methylcysteine intermediate is C353.

Belongs to the radical SAM superfamily. RlmN family. [4Fe-4S] cluster is required as a cofactor.

Its subcellular location is the cytoplasm. The enzyme catalyses adenosine(2503) in 23S rRNA + 2 reduced [2Fe-2S]-[ferredoxin] + 2 S-adenosyl-L-methionine = 2-methyladenosine(2503) in 23S rRNA + 5'-deoxyadenosine + L-methionine + 2 oxidized [2Fe-2S]-[ferredoxin] + S-adenosyl-L-homocysteine. It carries out the reaction adenosine(37) in tRNA + 2 reduced [2Fe-2S]-[ferredoxin] + 2 S-adenosyl-L-methionine = 2-methyladenosine(37) in tRNA + 5'-deoxyadenosine + L-methionine + 2 oxidized [2Fe-2S]-[ferredoxin] + S-adenosyl-L-homocysteine. Specifically methylates position 2 of adenine 2503 in 23S rRNA and position 2 of adenine 37 in tRNAs. m2A2503 modification seems to play a crucial role in the proofreading step occurring at the peptidyl transferase center and thus would serve to optimize ribosomal fidelity. This chain is Dual-specificity RNA methyltransferase RlmN, found in Nitrosomonas europaea (strain ATCC 19718 / CIP 103999 / KCTC 2705 / NBRC 14298).